We begin with the raw amino-acid sequence, 84 residues long: Small ribosomal subunit protein eS27w (84 aa).

A C4-type zinc finger spans residues 39-61 (CQGCFNITTVFSHSQTVVVCGNC).

Belongs to the eukaryotic ribosomal protein eS27 family. The cofactor is Zn(2+).

In Arabidopsis thaliana (Mouse-ear cress), this protein is Small ribosomal subunit protein eS27w (RPS27D).